Here is a 319-residue protein sequence, read N- to C-terminus: Telomere-binding protein cav (319 aa).

The tract at residues 107–312 is required for binding to Su(var)205; the sequence is RRKMVQPYPE…SISFQNSGSE (206 aa). Disordered stretches follow at residues 141–163 and 186–248; these read WQKQ…DNEV and PSDL…PDYY. Short sequence motifs (su(var)205-binding Pro-containing repeat) lie at residues 220–224 and 273–279; these read PETQM and PETEMNE. Over residues 291–311 the composition is skewed to polar residues; the sequence is SMSIGPSINSDGSISFQNSGS. Residues 291-319 are disordered; sequence SMSIGPSINSDGSISFQNSGSEPIDVDVN.

As to quaternary structure, interacts (via C-terminus) with Su(var)205 dimer (via hinge and chromoshadow domain) and with moi to form the terminin, telomere-capping, complex. Interacts with HP6, which is also part of the terminin complex.

Its subcellular location is the nucleus. The protein localises to the chromosome. The protein resides in the telomere. Functionally, binds to chromosome ends in a sequence-dependent manner and is required for telomere capping. In Drosophila yakuba (Fruit fly), this protein is Telomere-binding protein cav.